A 257-amino-acid chain; its full sequence is 5-oxoprolinase subunit A (257 aa).

This sequence belongs to the LamB/PxpA family. In terms of assembly, forms a complex composed of PxpA, PxpB and PxpC.

It carries out the reaction 5-oxo-L-proline + ATP + 2 H2O = L-glutamate + ADP + phosphate + H(+). Its function is as follows. Catalyzes the cleavage of 5-oxoproline to form L-glutamate coupled to the hydrolysis of ATP to ADP and inorganic phosphate. This chain is 5-oxoprolinase subunit A, found in Fusobacterium nucleatum subsp. nucleatum (strain ATCC 25586 / DSM 15643 / BCRC 10681 / CIP 101130 / JCM 8532 / KCTC 2640 / LMG 13131 / VPI 4355).